Reading from the N-terminus, the 1096-residue chain is Mediator of replication checkpoint protein 1 (1096 aa).

Residues 68-85 (EGKKAPEQNHNNGKDRSE) show a composition bias toward basic and acidic residues. Residues 68–90 (EGKKAPEQNHNNGKDRSENSLPT) form a disordered region. S144 carries the post-translational modification Phosphoserine. 3 disordered regions span residues 166-200 (ALKT…IEPQ), 294-316 (IQSE…YKKP), and 336-365 (DDSS…LHEN). The span at 181 to 200 (RIDSSGATSQTQPIKSIEPQ) shows a compositional bias: polar residues. The span at 294 to 315 (IQSELASEDSKREKARNVEYKK) shows a compositional bias: basic and acidic residues. Positions 336–346 (DDSSSNEDDDI) are enriched in acidic residues. Residues S409, S411, and S434 each carry the phosphoserine modification. Positions 488–542 (QKEVIETKGLKLEDMAKEKEIVENLLEQEILRNKRIRQKEKRREKLEENDFQLNA) form a coiled coil. Positions 527 to 620 (EKRREKLEEN…VEAKPKEKAD (94 aa)) are disordered. Low complexity predominate over residues 547–560 (SDSGSESSGFALSG). Residues 591–600 (KQKKSHHVKH) show a composition bias toward basic residues. S605 and S607 each carry phosphoserine. At T609 the chain carries Phosphothreonine. Residues 611 to 620 (VEAKPKEKAD) show a composition bias toward basic and acidic residues. Residues 652–716 (DTQNIEEVMA…IKELKKRGVT (65 aa)) adopt a coiled-coil conformation. The disordered stretch occupies residues 724-743 (EESEDEWHGIGGADGEGSDD). A phosphoserine mark is found at S801 and S807. The segment covering 881 to 898 (DTQDNSINVGDNTGNNEQ) has biased composition (polar residues). The disordered stretch occupies residues 881–903 (DTQDNSINVGDNTGNNEQKPVDQ). Residue S911 is modified to Phosphoserine. Residues 1058 to 1096 (RKTEGSHRYHHDHHNKKMKMKTKTKSNKLFESGQDSFDN) form a disordered region. Residues 1065–1083 (RYHHDHHNKKMKMKTKTKS) show a composition bias toward basic residues.

Interacts with CDC45 in S phase. Phosphorylated by MEC1 and RAD53.

It is found in the nucleus. Required for normal DNA replication. Phosphorylated in response to DNA replication stress. Phosphorylation allows it to mediate the activation of RAD53. The sequence is that of Mediator of replication checkpoint protein 1 (MRC1) from Saccharomyces cerevisiae (strain ATCC 204508 / S288c) (Baker's yeast).